The sequence spans 83 residues: Conotoxin VnMKLT1-022 (83 aa).

The N-terminal stretch at M1–A22 is a signal peptide. A propeptide spanning residues D23–N55 is cleaved from the precursor. 3 disulfides stabilise this stretch: C59–C74, C66–C78, and C73–C82.

It belongs to the conotoxin O1 superfamily. Expressed by the venom duct.

It localises to the secreted. The polypeptide is Conotoxin VnMKLT1-022 (Conus ventricosus (Mediterranean cone)).